Here is a 124-residue protein sequence, read N- to C-terminus: Putative iron-sulfur cluster insertion protein ErpA (124 aa).

Residues Cys-52, Cys-116, and Cys-118 each contribute to the iron-sulfur cluster site.

This sequence belongs to the HesB/IscA family. In terms of assembly, homodimer. Iron-sulfur cluster is required as a cofactor.

Required for insertion of 4Fe-4S clusters. This Delftia acidovorans (strain DSM 14801 / SPH-1) protein is Putative iron-sulfur cluster insertion protein ErpA.